A 161-amino-acid polypeptide reads, in one-letter code: Type II secretion system protein M (161 aa).

Topologically, residues 1–16 (MHNLLALWQQRTRRER) are cytoplasmic. The chain crosses the membrane as a helical span at residues 17-36 (CLLLGMAVVLLIGLVYYTLW). Topologically, residues 37–161 (QPWQNREAQW…TLVLERSDEK (125 aa)) are periplasmic.

It belongs to the GSP M family. Type II secretion system is composed of four main components: the outer membrane complex, the inner membrane complex, the cytoplasmic secretion ATPase and the periplasm-spanning pseudopilus. Forms homodimers. Interacts with PulL/GspL. Interacts with PulE/GspE and PulF/GspF.

The protein localises to the cell inner membrane. Functionally, inner membrane component of the type II secretion system required for the energy-dependent secretion of extracellular factors such as proteases and toxins from the periplasm. Plays a role in the complex assembly and recruits PulL resulting in a stable complex in the inner membrane. Provides thus a link between the energy-providing PulE protein in the cytoplasm and the rest of the T2SS machinery. This chain is Type II secretion system protein M (pulM), found in Klebsiella pneumoniae.